The primary structure comprises 467 residues: Ribulose bisphosphate carboxylase large chain (467 aa).

The residue at position 5 (K5) is an N6,N6,N6-trimethyllysine. The substrate site is built by N114 and T164. K166 (proton acceptor) is an active-site residue. Residue K168 participates in substrate binding. Mg(2+)-binding residues include K192, D194, and E195. K192 carries the N6-carboxylysine modification. Catalysis depends on H285, which acts as the Proton acceptor. Substrate-binding residues include R286, H318, and S370.

The protein belongs to the RuBisCO large chain family. Type I subfamily. Heterohexadecamer of 8 large chains and 8 small chains; disulfide-linked. The disulfide link is formed within the large subunit homodimers. Requires Mg(2+) as cofactor. In terms of processing, the disulfide bond which can form in the large chain dimeric partners within the hexadecamer appears to be associated with oxidative stress and protein turnover.

The protein resides in the plastid. It localises to the chloroplast. The catalysed reaction is 2 (2R)-3-phosphoglycerate + 2 H(+) = D-ribulose 1,5-bisphosphate + CO2 + H2O. It carries out the reaction D-ribulose 1,5-bisphosphate + O2 = 2-phosphoglycolate + (2R)-3-phosphoglycerate + 2 H(+). RuBisCO catalyzes two reactions: the carboxylation of D-ribulose 1,5-bisphosphate, the primary event in carbon dioxide fixation, as well as the oxidative fragmentation of the pentose substrate in the photorespiration process. Both reactions occur simultaneously and in competition at the same active site. This Jasminum simplicifolium subsp. suavissimum (Native jasmine) protein is Ribulose bisphosphate carboxylase large chain.